The chain runs to 598 residues: DNA primase (598 aa).

A CHC2-type zinc finger spans residues 38 to 62; that stretch reads CPFHDEKTPSFTVSEDKQICHCFGC. Positions 260-341 constitute a Toprim domain; that stretch reads DEIILLEGFM…NVYVVQLPSG (82 aa). Mg(2+) contacts are provided by glutamate 266, aspartate 310, and aspartate 312.

Belongs to the DnaG primase family. As to quaternary structure, monomer. Interacts with DnaB. Zn(2+) serves as cofactor. Mg(2+) is required as a cofactor.

It catalyses the reaction ssDNA + n NTP = ssDNA/pppN(pN)n-1 hybrid + (n-1) diphosphate.. RNA polymerase that catalyzes the synthesis of short RNA molecules used as primers for DNA polymerase during DNA replication. The polypeptide is DNA primase (Staphylococcus epidermidis (strain ATCC 12228 / FDA PCI 1200)).